We begin with the raw amino-acid sequence, 81 residues long: Photosystem I iron-sulfur center (81 aa).

4Fe-4S ferredoxin-type domains lie at 2-31 and 39-68; these read SHSV…MIPW and IASA…VRVS. Residues C11, C14, C17, C21, C48, C51, C54, and C58 each coordinate [4Fe-4S] cluster.

In terms of assembly, the eukaryotic PSI reaction center is composed of at least 11 subunits. [4Fe-4S] cluster is required as a cofactor.

The protein resides in the plastid. Its subcellular location is the chloroplast thylakoid membrane. It carries out the reaction reduced [plastocyanin] + hnu + oxidized [2Fe-2S]-[ferredoxin] = oxidized [plastocyanin] + reduced [2Fe-2S]-[ferredoxin]. Its function is as follows. Apoprotein for the two 4Fe-4S centers FA and FB of photosystem I (PSI); essential for photochemical activity. FB is the terminal electron acceptor of PSI, donating electrons to ferredoxin. The C-terminus interacts with PsaA/B/D and helps assemble the protein into the PSI complex. Required for binding of PsaD and PsaE to PSI. PSI is a plastocyanin-ferredoxin oxidoreductase, converting photonic excitation into a charge separation, which transfers an electron from the donor P700 chlorophyll pair to the spectroscopically characterized acceptors A0, A1, FX, FA and FB in turn. This chain is Photosystem I iron-sulfur center, found in Daucus carota (Wild carrot).